Reading from the N-terminus, the 90-residue chain is Large ribosomal subunit protein bL31 (90 aa).

The interval K71–E90 is disordered. Over residues N81 to E90 the composition is skewed to basic and acidic residues.

It belongs to the bacterial ribosomal protein bL31 family. Type A subfamily. Part of the 50S ribosomal subunit.

Functionally, binds the 23S rRNA. The polypeptide is Large ribosomal subunit protein bL31 (rpmE) (Aster yellows witches'-broom phytoplasma (strain AYWB)).